Consider the following 462-residue polypeptide: ATP-dependent protease ATPase subunit HslU (462 aa).

Residues I21, 63 to 68 (GVGKTE), D275, E340, and R412 each bind ATP.

The protein belongs to the ClpX chaperone family. HslU subfamily. A double ring-shaped homohexamer of HslV is capped on each side by a ring-shaped HslU homohexamer. The assembly of the HslU/HslV complex is dependent on binding of ATP.

It is found in the cytoplasm. Its function is as follows. ATPase subunit of a proteasome-like degradation complex; this subunit has chaperone activity. The binding of ATP and its subsequent hydrolysis by HslU are essential for unfolding of protein substrates subsequently hydrolyzed by HslV. HslU recognizes the N-terminal part of its protein substrates and unfolds these before they are guided to HslV for hydrolysis. The sequence is that of ATP-dependent protease ATPase subunit HslU from Pseudothermotoga lettingae (strain ATCC BAA-301 / DSM 14385 / NBRC 107922 / TMO) (Thermotoga lettingae).